The chain runs to 283 residues: Formamidopyrimidine-DNA glycosylase (283 aa).

Pro2 serves as the catalytic Schiff-base intermediate with DNA. Glu3 serves as the catalytic Proton donor. Lys61 (proton donor; for beta-elimination activity) is an active-site residue. 3 residues coordinate DNA: His94, Arg113, and Lys159. The segment at 245–279 (DAYGREGESCRRCGAVMRREKFMNRSSFYCPKCQP) adopts an FPG-type zinc-finger fold. Catalysis depends on Arg269, which acts as the Proton donor; for delta-elimination activity.

It belongs to the FPG family. Monomer. Requires Zn(2+) as cofactor.

It carries out the reaction Hydrolysis of DNA containing ring-opened 7-methylguanine residues, releasing 2,6-diamino-4-hydroxy-5-(N-methyl)formamidopyrimidine.. It catalyses the reaction 2'-deoxyribonucleotide-(2'-deoxyribose 5'-phosphate)-2'-deoxyribonucleotide-DNA = a 3'-end 2'-deoxyribonucleotide-(2,3-dehydro-2,3-deoxyribose 5'-phosphate)-DNA + a 5'-end 5'-phospho-2'-deoxyribonucleoside-DNA + H(+). Its function is as follows. Involved in base excision repair of DNA damaged by oxidation or by mutagenic agents. Acts as a DNA glycosylase that recognizes and removes damaged bases. Has a preference for oxidized purines, such as 7,8-dihydro-8-oxoguanine (8-oxoG). Has AP (apurinic/apyrimidinic) lyase activity and introduces nicks in the DNA strand. Cleaves the DNA backbone by beta-delta elimination to generate a single-strand break at the site of the removed base with both 3'- and 5'-phosphates. The chain is Formamidopyrimidine-DNA glycosylase from Mycobacterium avium (strain 104).